A 46-amino-acid polypeptide reads, in one-letter code: Esculentin-1SEb (46 aa).

A disulfide bridge links cysteine 40 with cysteine 46.

In terms of tissue distribution, expressed by the skin glands.

The protein resides in the secreted. Its function is as follows. Mast cell degranulating peptide. Causes histamine release from rat peritoneal mast cells in vitro. Has antibacterial activity against the Gram-negative bacterium E.coli K12 and Gram-positive bacterium M.luteus NCT C2665. This chain is Esculentin-1SEb, found in Lithobates sevosus (Dusky gopher frog).